The primary structure comprises 1442 residues: Trafficking protein particle complex subunit 10 (1442 aa).

Positions methionine 1–aspartate 23 are enriched in polar residues. 6 disordered regions span residues methionine 1–serine 86, threonine 251–lysine 277, glycine 535–isoleucine 564, leucine 1208–lysine 1238, glutamine 1316–glutamine 1335, and leucine 1422–threonine 1442. Residues serine 39–serine 86 show a composition bias toward low complexity. Residues glycine 535–glycine 553 show a composition bias toward low complexity. Positions lysine 554–isoleucine 564 are enriched in polar residues. Residues leucine 1208–histidine 1236 show a composition bias toward low complexity. A compositionally biased stretch (low complexity) spans asparagine 1425 to threonine 1442.

This sequence belongs to the TMEM1 family. In terms of assembly, part of the multisubunit TRAPP (transport protein particle) complex.

Its subcellular location is the golgi apparatus. It localises to the cis-Golgi network. Functionally, may play a role in vesicular transport from endoplasmic reticulum to Golgi. The protein is Trafficking protein particle complex subunit 10 (trapcc10-1) of Dictyostelium discoideum (Social amoeba).